A 575-amino-acid chain; its full sequence is MRPWTGSWRWIMLILFAWGTLLFYIGGHLVRDNDHSDHSSRELSKILAKLERLKQQNEDLRRMAESLRIPEGPIDQGPASGRVRALEEQFMKAKEQIENYKKQTKNGPGKDHEILRRRIENGAKELWFFLQSELKKLKNLEGNELQRHADEFLSDLGHHERSIMTDLYYLSQTDGAGDWREKEAKDLTELVQRRITYLQNPKDCSKAKKLVCNINKGCGYGCQLHHVVYCFMIAYGTQRTLALESHNWRYATGGWETVFRPVSETCTDRSGSSTGHWSGEVKDKNVQVVELPIVDSVHPRPPYLPLAVPEDLADRLVRVHGDPAVWWVSQFVKYLIRPQPWLEKEIEEATKKLGFKHPVIGVHVRRTDKVGAEAAFHPIEEYTVHVEEDFQLLARRMQVDKKRVYLATDDPALLKEAKTKYPSYEFISDNSISWSAGLHNRYTENSLRGVILDIHFLSQADFLVCTFSSQVCRVAYEIMQALHPDASANFRSLDDIYYFGGPNAHNQIAIYPHQPRTEGEIPMEPGDIIGVAGNHWDGYPKGVNRKLGRTGLYPSYKVREKIETVKYPTYPEADK.

Topologically, residues 1-9 (MRPWTGSWR) are cytoplasmic. The chain crosses the membrane as a helical; Signal-anchor for type II membrane protein span at residues 10–30 (WIMLILFAWGTLLFYIGGHLV). Residues 31 to 575 (RDNDHSDHSS…KYPTYPEADK (545 aa)) lie on the Lumenal side of the membrane. Intrachain disulfides connect C204/C266, C212/C230, and C218/C222. Residues 206–493 (KAKKLVCNIN…PDASANFRSL (288 aa)) enclose the GT23 domain. S278 is modified (phosphoserine). Positions 299–305 (PRPPYLP) match the SH3-binding motif. Residues 365–366 (RR) are important for donor substrate binding. A disulfide bridge links C465 with C472. An SH3 domain is found at 502–563 (PNAHNQIAIY…PSYKVREKIE (62 aa)).

This sequence belongs to the glycosyltransferase 23 family. Tyrosine phosphorylated by PKDCC/VLK. As to expression, highest expression in brain.

The protein resides in the golgi apparatus. The protein localises to the golgi stack membrane. It catalyses the reaction N(4)-{beta-D-GlcNAc-(1-&gt;2)-alpha-D-Man-(1-&gt;3)-[beta-D-GlcNAc-(1-&gt;2)-alpha-D-Man-(1-&gt;6)]-beta-D-Man-(1-&gt;4)-beta-D-GlcNAc-(1-&gt;4)-beta-D-GlcNAc}-L-asparaginyl-[protein] + GDP-beta-L-fucose = an N(4)-{beta-D-GlcNAc-(1-&gt;2)-alpha-D-Man-(1-&gt;3)-[beta-D-GlcNAc-(1-&gt;2)-alpha-D-Man-(1-&gt;6)]-beta-D-Man-(1-&gt;4)-beta-D-GlcNAc-(1-&gt;4)-[alpha-L-Fuc-(1-&gt;6)]-beta-D-GlcNAc}-L-asparaginyl-[protein] + GDP + H(+). It participates in protein modification; protein glycosylation. Functionally, catalyzes the addition of fucose in alpha 1-6 linkage to the first GlcNAc residue, next to the peptide chains in N-glycans. This Sus scrofa (Pig) protein is Alpha-(1,6)-fucosyltransferase (FUT8).